Here is a 578-residue protein sequence, read N- to C-terminus: Arginine--tRNA ligase (578 aa).

The short motif at 127 to 137 (PNLAKEMHVGH) is the 'HIGH' region element.

Belongs to the class-I aminoacyl-tRNA synthetase family. As to quaternary structure, monomer.

Its subcellular location is the cytoplasm. It catalyses the reaction tRNA(Arg) + L-arginine + ATP = L-arginyl-tRNA(Arg) + AMP + diphosphate. The sequence is that of Arginine--tRNA ligase from Pseudomonas putida (strain ATCC 47054 / DSM 6125 / CFBP 8728 / NCIMB 11950 / KT2440).